The following is a 461-amino-acid chain: PTS system sucrose-specific EIIBC component (461 aa).

Residues 4-87 (KETAKRLIEL…SKEADIEREE (84 aa)) enclose the PTS EIIB type-1 domain. The active-site Phosphocysteine intermediate; for EIIB activity is Cys26. In terms of domain architecture, PTS EIIC type-1 spans 107–461 (KTLSNIFVPI…KINEDEERKK (355 aa)). The next 10 helical transmembrane spans lie at 112–132 (IFVP…LLGM), 148–168 (LLDM…GVSA), 178–198 (LGAV…WGLA), 208–228 (FGFD…LLAV), 248–268 (LLVT…IAIG), 289–309 (AGFV…LTGV), 329–349 (LLPI…AVFF), 359–379 (IALP…IFGV), 387–407 (FIAA…THVA), and 430–450 (LIHY…AAFV).

It localises to the cell membrane. The catalysed reaction is N(pros)-phospho-L-histidyl-[protein](out) + sucrose = sucrose 6(G)-phosphate(in) + L-histidyl-[protein]. The phosphoenolpyruvate-dependent sugar phosphotransferase system (sugar PTS), a major carbohydrate active transport system, catalyzes the phosphorylation of incoming sugar substrates concomitantly with their translocation across the cell membrane. This system is involved in sucrose transport. The chain is PTS system sucrose-specific EIIBC component (sacP) from Bacillus subtilis (strain 168).